We begin with the raw amino-acid sequence, 609 residues long: Probable G-protein coupled receptor 153 (609 aa).

The Extracellular portion of the chain corresponds to 1-11; the sequence is MSDERRLPGSA. A helical transmembrane segment spans residues 12–32; that stretch reads VGWLVCGGLSLLANAWGILSV. Residues 33–41 lie on the Cytoplasmic side of the membrane; it reads GAKQKKWKP. The helical transmembrane segment at 42–62 threads the bilayer; it reads LEFLLCTLAATHMLNVAVPIA. The Extracellular portion of the chain corresponds to 63 to 84; it reads TYSVVQLRRQRPDFEWNEGLCK. The chain crosses the membrane as a helical span at residues 85–105; that stretch reads VFVSTFYTLTLATCFSVTSLS. Over 106 to 126 the chain is Cytoplasmic; sequence YHRMWMVCWPVNYRLSNAKKQ. Residues 127 to 147 form a helical membrane-spanning segment; that stretch reads AVHTVMGIWMVSFILSALPAV. Residues 148-175 are Extracellular-facing; that stretch reads GWHDTSERFYTHGCRFIVAEIGLGFGVC. Residues 176–196 traverse the membrane as a helical segment; it reads FLLLVGGSVAMGVICTAIALF. Residues 197–243 are Cytoplasmic-facing; that stretch reads QTLAVQVGRQADRRAFTVPTIVVEDAQGKRRSSIDGSEPAKTSLQTT. The chain crosses the membrane as a helical span at residues 244-264; that stretch reads GLVTTIVFIYDCLMGFPVLVV. Residues 265-276 lie on the Extracellular side of the membrane; sequence SFSSLRADASAP. The helical transmembrane segment at 277-297 threads the bilayer; that stretch reads WMALCVLWCSVAQALLLPVFL. The Cytoplasmic segment spans residues 298-609; that stretch reads WACDRYRADL…LHSDSLGSAS (312 aa). 2 disordered regions span residues 446–496 and 514–609; these read DAPP…SASA and ALRR…GSAS. 2 stretches are compositionally biased toward low complexity: residues 458-479 and 527-536; these read ESLL…RDSP and AAPDGADPGE. The span at 571 to 583 shows a compositional bias: gly residues; that stretch reads EPGGLRAAGGGGS. Residues 584–596 are compositionally biased toward low complexity; the sequence is TSSFLSSPSESSG.

This sequence belongs to the G-protein coupled receptor 1 family.

It localises to the cell membrane. In terms of biological role, orphan receptor. The sequence is that of Probable G-protein coupled receptor 153 (GPR153) from Homo sapiens (Human).